The sequence spans 196 residues: Probable malonic semialdehyde reductase RutE (196 aa).

It belongs to the nitroreductase family. HadB/RutE subfamily. It depends on FMN as a cofactor.

The catalysed reaction is 3-hydroxypropanoate + NADP(+) = 3-oxopropanoate + NADPH + H(+). In terms of biological role, may reduce toxic product malonic semialdehyde to 3-hydroxypropionic acid, which is excreted. This is Probable malonic semialdehyde reductase RutE from Escherichia coli O8 (strain IAI1).